Reading from the N-terminus, the 349-residue chain is tRNA N6-adenosine threonylcarbamoyltransferase (349 aa).

Residues histidine 114 and histidine 118 each coordinate Fe cation. Substrate contacts are provided by residues 136–140 (IMSGG), aspartate 169, glycine 182, and asparagine 280. A Fe cation-binding site is contributed by aspartate 308.

The protein belongs to the KAE1 / TsaD family. Requires Fe(2+) as cofactor.

It localises to the cytoplasm. The catalysed reaction is L-threonylcarbamoyladenylate + adenosine(37) in tRNA = N(6)-L-threonylcarbamoyladenosine(37) in tRNA + AMP + H(+). In terms of biological role, required for the formation of a threonylcarbamoyl group on adenosine at position 37 (t(6)A37) in tRNAs that read codons beginning with adenine. Is involved in the transfer of the threonylcarbamoyl moiety of threonylcarbamoyl-AMP (TC-AMP) to the N6 group of A37, together with TsaE and TsaB. TsaD likely plays a direct catalytic role in this reaction. This Ehrlichia chaffeensis (strain ATCC CRL-10679 / Arkansas) protein is tRNA N6-adenosine threonylcarbamoyltransferase.